The following is a 119-amino-acid chain: Iron-sulfur cluster insertion protein ErpA (119 aa).

Residues C47, C111, and C113 each contribute to the iron-sulfur cluster site.

Belongs to the HesB/IscA family. Homodimer. It depends on iron-sulfur cluster as a cofactor.

Required for insertion of 4Fe-4S clusters for at least IspG. The sequence is that of Iron-sulfur cluster insertion protein ErpA from Blochmanniella floridana.